We begin with the raw amino-acid sequence, 523 residues long: Signal peptide peptidase-like 3 (523 aa).

The first 35 residues, 1-35, serve as a signal peptide directing secretion; it reads MAFPAPSSSSPRRRGRGLAYLLVSVLLLASRVPGA. The Lumenal segment spans residues 36 to 207; that stretch reads AGADSEFEDG…EKPSFDGAIP (172 aa). In terms of domain architecture, PA spans 110–182; that stretch reads SAPLASSIAV…SQSAGRKILS (73 aa). A glycan (N-linked (GlcNAc...) asparagine) is linked at Asn-159. A helical membrane pass occupies residues 208–228; the sequence is FLWLMAVGSVACASVWSFVVV. Topologically, residues 229–254 are cytoplasmic; sequence GDEDKNAPTLGGEEAADSEIVELQTK. The chain crosses the membrane as a helical span at residues 255-272; it reads TALVFIVTASLVLLFLFF. At 273–275 the chain is on the lumenal side; the sequence is FKS. Residues 276 to 298 form a helical membrane-spanning segment; sequence TWSAWLLVVLFCLSGLQGLHYVA. Residues 299–321 lie on the Cytoplasmic side of the membrane; the sequence is STLIVRTCDRCREAKVALPVLGN. A helical transmembrane segment spans residues 322 to 342; the sequence is VTVVTLVILPLALIFVVVWAV. The Lumenal portion of the chain corresponds to 343–347; it reads HQNSP. A helical membrane pass occupies residues 348-368; sequence FAWVGQDLMGICMMILVLQVV. The Cytoplasmic portion of the chain corresponds to 369–377; sequence HLPNIKVAT. Residues 378-398 traverse the membrane as a helical segment; it reads ALLVSAFMYDIFWVFISPFIF. Asp-387 is an active-site residue. Residues 399–430 lie on the Lumenal side of the membrane; that stretch reads KKSVMITVARGSDEGPSLPMVLKMPKEFDTWN. The helical transmembrane segment at 431–451 threads the bilayer; it reads GYDMIGFGDILFPGLLVAFSF. Residue Asp-439 is part of the active site. Residues 452–465 are Cytoplasmic-facing; that stretch reads RYDRANGKDLTDGY. Residues 466–486 traverse the membrane as a helical segment; sequence FLCLMIGYAFGLSCTYVGLYL. The Lumenal segment spans residues 487–489; the sequence is MKS. Residues 490–510 form a helical membrane-spanning segment; sequence GQPALLYLVPSTLGTIVTLGA. Residues 492-494 carry the PAL motif; it reads PAL. Residues 511–523 are Cytoplasmic-facing; that stretch reads KRGELSQLWNAKV.

This sequence belongs to the peptidase A22B family. In terms of processing, glycosylated.

It is found in the endosome membrane. In terms of biological role, intramembrane-cleaving aspartic protease (I-CLiP) that cleaves type II membrane signal peptides in the hydrophobic plane of the membrane. The protein is Signal peptide peptidase-like 3 (SPPL3) of Oryza sativa subsp. japonica (Rice).